We begin with the raw amino-acid sequence, 174 residues long: uncharacterized protein (174 aa).

The first 31 residues, 1–31, serve as a signal peptide directing secretion; it reads MCCVYRMNRPASGLTVVFCGKLSGKPGPKSA. Residues 39 to 59 are disordered; the sequence is KSGADDGGENPRFFSAGPRTE.

This is an uncharacterized protein from Escherichia coli (strain K12).